The following is a 306-amino-acid chain: MKRDFVDLWDLSPKEAWEIVKKTLKVKKGEEELGKPLSGKTIALLFTKPSTRTRVSFEVGIYQLGGNSLFFQEKELQVSRGEDVRDTARTLSKYVDGVIVRNHSHTWLKEFANFASVPVINALTNMSHPCQILSDVFTLYEHYGEELKNLKVAYVGDGNNVCNTLMVGAGMFGLKLFVATPEGYEPNSYYYKKALEFSKENGGSVELTNNPVESVKDADVVYTDVWVSMGEENKNIEAFLPYQVNEKLLSFAKSSVKVMHCLPAKKGQEITEEVFEKNADFIFTQAENRLHTQKTLMEFLFREPQA.

Carbamoyl phosphate contacts are provided by residues 50–53 (STRT), Q77, R101, and 128–131 (HPCQ). Residues N160, D224, and 228–229 (SM) each bind L-ornithine. Carbamoyl phosphate is bound by residues 261 to 262 (CL) and R289.

Belongs to the aspartate/ornithine carbamoyltransferase superfamily. OTCase family.

It is found in the cytoplasm. The catalysed reaction is carbamoyl phosphate + L-ornithine = L-citrulline + phosphate + H(+). It functions in the pathway amino-acid biosynthesis; L-arginine biosynthesis; L-arginine from L-ornithine and carbamoyl phosphate: step 1/3. Reversibly catalyzes the transfer of the carbamoyl group from carbamoyl phosphate (CP) to the N(epsilon) atom of ornithine (ORN) to produce L-citrulline. The chain is Ornithine carbamoyltransferase from Aquifex aeolicus (strain VF5).